A 708-amino-acid chain; its full sequence is Transcriptional regulator nsrM (708 aa).

Residues 37-63 (CVRCQQRKVRCDHKSPCGNCVASDSQC) constitute a DNA-binding region (zn(2)-C6 fungal-type).

The protein resides in the nucleus. Transcriptional regulator; part of the gene cluster that mediates the biosynthesis of the tetrahydroxanthone dimer neosartorin, which exhibits antibacterial activity. The sequence is that of Transcriptional regulator nsrM from Aspergillus novofumigatus (strain IBT 16806).